Reading from the N-terminus, the 654-residue chain is Integrator complex subunit 9 (654 aa).

1D-myo-inositol hexakisphosphate contacts are provided by M1, R2, T18, F19, R504, K508, and R509.

This sequence belongs to the metallo-beta-lactamase superfamily. RNA-metabolizing metallo-beta-lactamase-like family. INTS9 subfamily. Belongs to the multiprotein complex Integrator, at least composed of IntS1, IntS2, IntS3, IntS4, omd/IntS5, IntS6, defl/IntS7, IntS8, IntS9, IntS10, IntS11, IntS12, asun/IntS13, IntS14 and IntS15. The core complex associates with protein phosphatase 2A subunits mts/PP2A and Pp2A-29B, to form the Integrator-PP2A (INTAC) complex. Within the complex, interacts with IntS1 and IntS12. IntS9 is part of the RNA endonuclease subcomplex, composed of IntS4, IntS9, IntS11 and inositol hexakisphosphate (InsP6).

The protein localises to the nucleus. Its subcellular location is the cytoplasm. It localises to the cytosol. Its function is as follows. Component of the integrator complex, a multiprotein complex that terminates RNA polymerase II (Pol II) transcription in the promoter-proximal region of genes. The integrator complex provides a quality checkpoint during transcription elongation by driving premature transcription termination of transcripts that are unfavorably configured for transcriptional elongation: the complex terminates transcription by (1) catalyzing dephosphorylation of the C-terminal domain (CTD) of Pol II subunit Polr2A/Rbp1 and Spt5, and (2) degrading the exiting nascent RNA transcript via endonuclease activity. The integrator complex is also involved in the 3'-end processing of the U7 snRNA, and also the spliceosomal snRNAs U1, U2, U4 and U5. This is Integrator complex subunit 9 from Drosophila melanogaster (Fruit fly).